The sequence spans 243 residues: UPF0688 protein C1orf174 (243 aa).

Disordered stretches follow at residues 78 to 100 and 132 to 243; these read NDSA…AEGS and LAKT…DAEM. A compositionally biased stretch (low complexity) spans 145-157; that stretch reads SAGSGAEESNSSS. Phosphoserine occurs at positions 148 and 189. A compositionally biased stretch (acidic residues) spans 233-243; the sequence is DDDDDDDDAEM.

Belongs to the UPF0688 family.

Its subcellular location is the nucleus. This is UPF0688 protein C1orf174 (C1orf174) from Homo sapiens (Human).